The chain runs to 120 residues: Large ribosomal subunit protein bL21 (120 aa).

This sequence belongs to the bacterial ribosomal protein bL21 family. Part of the 50S ribosomal subunit. Contacts protein L20.

This protein binds to 23S rRNA in the presence of protein L20. The polypeptide is Large ribosomal subunit protein bL21 (Roseiflexus sp. (strain RS-1)).